The following is a 237-amino-acid chain: LexA repressor (237 aa).

The segment at residues 26 to 46 (FDEMKIALELTSKSGIHRLIT) is a DNA-binding region (H-T-H motif). Catalysis depends on for autocatalytic cleavage activity residues Ser-158 and Lys-196.

This sequence belongs to the peptidase S24 family. As to quaternary structure, homodimer.

It catalyses the reaction Hydrolysis of Ala-|-Gly bond in repressor LexA.. In terms of biological role, represses a number of genes involved in the response to DNA damage (SOS response), including recA and lexA. In the presence of single-stranded DNA, RecA interacts with LexA causing an autocatalytic cleavage which disrupts the DNA-binding part of LexA, leading to derepression of the SOS regulon and eventually DNA repair. This is LexA repressor from Bartonella quintana (strain Toulouse) (Rochalimaea quintana).